The chain runs to 206 residues: FMN-dependent NADH:quinone oxidoreductase 2 (206 aa).

Residues Ser-10, 16-18 (SYS), and 140-143 (SCGG) contribute to the FMN site.

It belongs to the azoreductase type 1 family. As to quaternary structure, homodimer. FMN serves as cofactor.

The catalysed reaction is 2 a quinone + NADH + H(+) = 2 a 1,4-benzosemiquinone + NAD(+). The enzyme catalyses N,N-dimethyl-1,4-phenylenediamine + anthranilate + 2 NAD(+) = 2-(4-dimethylaminophenyl)diazenylbenzoate + 2 NADH + 2 H(+). Functionally, quinone reductase that provides resistance to thiol-specific stress caused by electrophilic quinones. In terms of biological role, also exhibits azoreductase activity. Catalyzes the reductive cleavage of the azo bond in aromatic azo compounds to the corresponding amines. The chain is FMN-dependent NADH:quinone oxidoreductase 2 from Cupriavidus pinatubonensis (strain JMP 134 / LMG 1197) (Cupriavidus necator (strain JMP 134)).